Reading from the N-terminus, the 113-residue chain is rRNA-processing protein cgrA (113 aa).

Polar residues predominate over residues 1-15 (MSTITTSSVASSNGM). The disordered stretch occupies residues 1–113 (MSTITTSSVA…REKRNKLLHS (113 aa)). The stretch at 37–100 (SYEKRLEARK…EKMHRKRVER (64 aa)) forms a coiled coil. Residues 38–92 (YEKRLEARKLQEAVKEHEREMREEREAERKAQIQKIKDRRAAKEEKERYEKMAEK) are compositionally biased toward basic and acidic residues. The segment covering 93-113 (MHRKRVERLKRREKRNKLLHS) has biased composition (basic residues).

This sequence belongs to the CGR1 family.

The protein resides in the nucleus. It localises to the nucleolus. In terms of biological role, involved in nucleolar integrity and required for processing of the pre-rRNA for the 60S ribosome subunit. The sequence is that of rRNA-processing protein cgrA (cgrA) from Aspergillus clavatus (strain ATCC 1007 / CBS 513.65 / DSM 816 / NCTC 3887 / NRRL 1 / QM 1276 / 107).